A 475-amino-acid chain; its full sequence is Ribulose bisphosphate carboxylase large chain (475 aa).

A propeptide spanning residues 1-2 (MS) is cleaved from the precursor. At Pro-3 the chain carries N-acetylproline. N6,N6,N6-trimethyllysine is present on Lys-14. Substrate is bound by residues Asn-123 and Thr-173. Lys-175 serves as the catalytic Proton acceptor. Lys-177 provides a ligand contact to substrate. 3 residues coordinate Mg(2+): Lys-201, Asp-203, and Glu-204. Lys-201 carries the post-translational modification N6-carboxylysine. The active-site Proton acceptor is His-294. 3 residues coordinate substrate: Arg-295, His-327, and Ser-379.

This sequence belongs to the RuBisCO large chain family. Type I subfamily. In terms of assembly, heterohexadecamer of 8 large chains and 8 small chains; disulfide-linked. The disulfide link is formed within the large subunit homodimers. Mg(2+) is required as a cofactor. Post-translationally, the disulfide bond which can form in the large chain dimeric partners within the hexadecamer appears to be associated with oxidative stress and protein turnover.

It localises to the plastid. Its subcellular location is the chloroplast. It catalyses the reaction 2 (2R)-3-phosphoglycerate + 2 H(+) = D-ribulose 1,5-bisphosphate + CO2 + H2O. The enzyme catalyses D-ribulose 1,5-bisphosphate + O2 = 2-phosphoglycolate + (2R)-3-phosphoglycerate + 2 H(+). Functionally, ruBisCO catalyzes two reactions: the carboxylation of D-ribulose 1,5-bisphosphate, the primary event in carbon dioxide fixation, as well as the oxidative fragmentation of the pentose substrate in the photorespiration process. Both reactions occur simultaneously and in competition at the same active site. This Pinus balfouriana (Foxtail pine) protein is Ribulose bisphosphate carboxylase large chain.